The primary structure comprises 81 residues: Photosystem I iron-sulfur center (81 aa).

2 consecutive 4Fe-4S ferredoxin-type domains span residues 2–31 and 39–68; these read AHTV…MVPW and IASA…IRVY. [4Fe-4S] cluster is bound by residues Cys-11, Cys-14, Cys-17, Cys-21, Cys-48, Cys-51, Cys-54, and Cys-58.

The eukaryotic PSI reaction center is composed of at least 11 subunits. [4Fe-4S] cluster serves as cofactor.

The protein resides in the plastid. Its subcellular location is the cyanelle thylakoid membrane. It catalyses the reaction reduced [plastocyanin] + hnu + oxidized [2Fe-2S]-[ferredoxin] = oxidized [plastocyanin] + reduced [2Fe-2S]-[ferredoxin]. Apoprotein for the two 4Fe-4S centers FA and FB of photosystem I (PSI); essential for photochemical activity. FB is the terminal electron acceptor of PSI, donating electrons to ferredoxin. The C-terminus interacts with PsaA/B/D and helps assemble the protein into the PSI complex. Required for binding of PsaD and PsaE to PSI. PSI is a cytochrome c6-ferredoxin oxidoreductase, converting photonic excitation into a charge separation, which transfers an electron from the donor P700 chlorophyll pair to the spectroscopically characterized acceptors A0, A1, FX, FA and FB in turn. In Cyanophora paradoxa, this protein is Photosystem I iron-sulfur center.